A 402-amino-acid polypeptide reads, in one-letter code: E3 ubiquitin-protein ligase makorin-2 (402 aa).

3 consecutive C3H1-type zinc fingers follow at residues 2–29 (TTKQVTCRYFLHGVCREGNHCQFSHDPS), 31–58 (SKPSTICKFYQRGTCAYGERCRYDHVKL), and 141–168 (QDLPRLCPYAAVGHCYYEENCIYLHGDK). Residues 169-198 (CEVCGLQVLDPHNPEQRSMHEKMCLLAFEA) form a makorin-type Cys-His region. The RING-type zinc-finger motif lies at 214-268 (CSICMEVVVQKMNPSDRRFGILSSCCHVFCLACIRKWRCTRNFSNKIIKSCPECR). The C3H1-type 4 zinc finger occupies 297–326 (GVGKKPCKYFDQGRGSCPFGGKCLYLHALP).

It is found in the cytoplasm. It localises to the nucleus. It carries out the reaction S-ubiquitinyl-[E2 ubiquitin-conjugating enzyme]-L-cysteine + [acceptor protein]-L-lysine = [E2 ubiquitin-conjugating enzyme]-L-cysteine + N(6)-ubiquitinyl-[acceptor protein]-L-lysine.. The protein operates within protein modification; protein ubiquitination. Functionally, E3 ubiquitin ligase catalyzing the covalent attachment of ubiquitin moieties onto substrate proteins. Inhibits neurogenesis and axis formation during embryonic development by modulating the phosphatidylinositol 3-kinase (PI3K) pathway. Acts downstream of PI3K and akt1 to up-regulate gsk3b mRNA expression. The sequence is that of E3 ubiquitin-protein ligase makorin-2 from Takifugu rubripes (Japanese pufferfish).